We begin with the raw amino-acid sequence, 357 residues long: G-protein coupled receptor 183 (357 aa).

Residues 1–32 (MANNFTTPLAASHGNNCDLYAHHSTARILMPL) are Extracellular-facing. Asparagine 4 is a glycosylation site (N-linked (GlcNAc...) asparagine). The helical transmembrane segment at 33–53 (HYSLVFIIGLVGNLLALVVIV) threads the bilayer. Residues 54–68 (QNRKKINSTTLYSMN) are Cytoplasmic-facing. Residues 69–89 (LVISDILFTTALPTRIVYYAL) form a helical membrane-spanning segment. Residue arginine 83 coordinates 7alpha,25-dihydroxycholesterol. Residues 90–101 (GFDWRIGDALCR) are Extracellular-facing. Cysteine 100 and cysteine 177 are joined by a disulfide. The helical transmembrane segment at 102–122 (ITALLFYINTYAGVNFMTCLS) threads the bilayer. 7alpha,25-dihydroxycholesterol contacts are provided by tyrosine 108 and tyrosine 112. Residues 122–130 (SIDRFFAVV) form an interaction with G proteins region. Residues 123–143 (IDRFFAVVHPLRYNKIKRIEY) are Cytoplasmic-facing. Residues 144–164 (AKGICVFVWILVFAQTLPLLL) traverse the membrane as a helical segment. Topologically, residues 165–190 (KPMSKQEADKTTCMEYPNFEGTASLP) are extracellular. The helical transmembrane segment at 191 to 211 (WILLGACLLGYVLPLAIILLC) threads the bilayer. Residues 212 to 240 (YSQICCKLFRTAKQNPLTEKSGVNKKALN) lie on the Cytoplasmic side of the membrane. The helical transmembrane segment at 241–261 (TIILIIGVFVLCFTPYHVAIM) threads the bilayer. 7alpha,25-dihydroxycholesterol is bound at residue tyrosine 256. At 262–287 (QHMVKTLYAPGALGCGVRHSFQISLH) the chain is on the extracellular side. The chain crosses the membrane as a helical span at residues 288–308 (FTVCLMNFNCCMDPFIYFFAC). At 309–357 (KGYKRKVMKMLKRQVSVSISSAVRSAPEENSREMTESQMMIHSKASNGR) the chain is on the cytoplasmic side. Serine 324 and serine 345 each carry phosphoserine. Positions 336-357 (EENSREMTESQMMIHSKASNGR) are disordered. Residues 344 to 357 (ESQMMIHSKASNGR) are compositionally biased toward polar residues.

It belongs to the G-protein coupled receptor 1 family. As to quaternary structure, homodimer and heterodimer. Heterodimerizes with CXCR5; leading to modulate the interaction between of CXCL13 and CXCR5.

It localises to the cell membrane. G-protein coupled receptor expressed in lymphocytes that acts as a chemotactic receptor for B-cells, T-cells, splenic dendritic cells, monocytes/macrophages and astrocytes. Receptor for oxysterol 7-alpha,25-dihydroxycholesterol (7-alpha,25-OHC) and other related oxysterols. Mediates cell positioning and movement of a number of cells by binding the 7-alpha,25-OHC ligand that forms a chemotactic gradient. Binding of 7-alpha,25-OHC mediates the correct localization of B-cells during humoral immune responses. Guides B-cell movement along the B-cell zone-T-cell zone boundary and later to interfollicular and outer follicular regions. Its specific expression during B-cell maturation helps position B-cells appropriately for mounting T-dependent antibody responses. Collaborates with CXCR5 to mediate B-cell migration; probably by forming a heterodimer with CXCR5 that affects the interaction between of CXCL13 and CXCR5. Also acts as a chemotactic receptor for some T-cells upon binding to 7-alpha,25-OHC ligand. Promotes follicular helper T (Tfh) cells differentiation by positioning activated T-cells at the follicle-T-zone interface, promoting contact of newly activated CD4 T-cells with activated dendritic cells and exposing them to Tfh-cell-promoting inducible costimulator (ICOS) ligand. Expression in splenic dendritic cells is required for their homeostasis, localization and ability to induce B- and T-cell responses: GPR183 acts as a chemotactic receptor in dendritic cells that mediates the accumulation of CD4(+) dendritic cells in bridging channels. Regulates migration of astrocytes and is involved in communication between astrocytes and macrophages. Promotes osteoclast precursor migration to bone surfaces. Signals constitutively through G(i)-alpha, but not G(s)-alpha or G(q)-alpha. Signals constitutively also via MAPK1/3 (ERK1/2). The polypeptide is G-protein coupled receptor 183 (Gpr183) (Rattus norvegicus (Rat)).